Here is a 325-residue protein sequence, read N- to C-terminus: Phosphate acyltransferase (325 aa).

This sequence belongs to the PlsX family. As to quaternary structure, homodimer. Probably interacts with PlsY.

The protein resides in the cytoplasm. It carries out the reaction a fatty acyl-[ACP] + phosphate = an acyl phosphate + holo-[ACP]. It functions in the pathway lipid metabolism; phospholipid metabolism. Functionally, catalyzes the reversible formation of acyl-phosphate (acyl-PO(4)) from acyl-[acyl-carrier-protein] (acyl-ACP). This enzyme utilizes acyl-ACP as fatty acyl donor, but not acyl-CoA. The polypeptide is Phosphate acyltransferase (Staphylococcus epidermidis (strain ATCC 35984 / DSM 28319 / BCRC 17069 / CCUG 31568 / BM 3577 / RP62A)).